The sequence spans 218 residues: Phosphatidylserine decarboxylase proenzyme (218 aa).

Ser-183 functions as the Schiff-base intermediate with substrate; via pyruvic acid in the catalytic mechanism. Residue Ser-183 is modified to Pyruvic acid (Ser); by autocatalysis.

This sequence belongs to the phosphatidylserine decarboxylase family. PSD-A subfamily. Heterodimer of a large membrane-associated beta subunit and a small pyruvoyl-containing alpha subunit. Pyruvate is required as a cofactor. Post-translationally, is synthesized initially as an inactive proenzyme. Formation of the active enzyme involves a self-maturation process in which the active site pyruvoyl group is generated from an internal serine residue via an autocatalytic post-translational modification. Two non-identical subunits are generated from the proenzyme in this reaction, and the pyruvate is formed at the N-terminus of the alpha chain, which is derived from the carboxyl end of the proenzyme. The post-translation cleavage follows an unusual pathway, termed non-hydrolytic serinolysis, in which the side chain hydroxyl group of the serine supplies its oxygen atom to form the C-terminus of the beta chain, while the remainder of the serine residue undergoes an oxidative deamination to produce ammonia and the pyruvoyl prosthetic group on the alpha chain.

Its subcellular location is the cell membrane. It catalyses the reaction a 1,2-diacyl-sn-glycero-3-phospho-L-serine + H(+) = a 1,2-diacyl-sn-glycero-3-phosphoethanolamine + CO2. Its pathway is phospholipid metabolism; phosphatidylethanolamine biosynthesis; phosphatidylethanolamine from CDP-diacylglycerol: step 2/2. Catalyzes the formation of phosphatidylethanolamine (PtdEtn) from phosphatidylserine (PtdSer). The protein is Phosphatidylserine decarboxylase proenzyme of Magnetococcus marinus (strain ATCC BAA-1437 / JCM 17883 / MC-1).